Consider the following 311-residue polypeptide: tRNA-cytidine(32) 2-sulfurtransferase (311 aa).

A disordered region spans residues 18–38 (KVGADHGPSEENGSSHPLFDN). The PP-loop motif signature appears at 77-82 (SGGKDS). The [4Fe-4S] cluster site is built by cysteine 152, cysteine 155, and cysteine 243.

This sequence belongs to the TtcA family. As to quaternary structure, homodimer. It depends on Mg(2+) as a cofactor. [4Fe-4S] cluster serves as cofactor.

Its subcellular location is the cytoplasm. The catalysed reaction is cytidine(32) in tRNA + S-sulfanyl-L-cysteinyl-[cysteine desulfurase] + AH2 + ATP = 2-thiocytidine(32) in tRNA + L-cysteinyl-[cysteine desulfurase] + A + AMP + diphosphate + H(+). It functions in the pathway tRNA modification. Its function is as follows. Catalyzes the ATP-dependent 2-thiolation of cytidine in position 32 of tRNA, to form 2-thiocytidine (s(2)C32). The sulfur atoms are provided by the cysteine/cysteine desulfurase (IscS) system. The chain is tRNA-cytidine(32) 2-sulfurtransferase from Agrobacterium fabrum (strain C58 / ATCC 33970) (Agrobacterium tumefaciens (strain C58)).